A 275-amino-acid chain; its full sequence is Phosphonoacetaldehyde hydrolase (275 aa).

The active-site Nucleophile is the Asp15. Residues Asp15 and Ala17 each contribute to the Mg(2+) site. Lys56 (schiff-base intermediate with substrate) is an active-site residue. Asp189 provides a ligand contact to Mg(2+).

It belongs to the HAD-like hydrolase superfamily. PhnX family. In terms of assembly, homodimer. Mg(2+) serves as cofactor.

It carries out the reaction phosphonoacetaldehyde + H2O = acetaldehyde + phosphate + H(+). Functionally, involved in phosphonate degradation. The polypeptide is Phosphonoacetaldehyde hydrolase (Pseudomonas paraeruginosa (strain DSM 24068 / PA7) (Pseudomonas aeruginosa (strain PA7))).